Consider the following 242-residue polypeptide: Flavin prenyltransferase PAD1, mitochondrial (242 aa).

The N-terminal 58 residues, 1–58, are a transit peptide targeting the mitochondrion; the sequence is MLLFPRRTNIAFFKTTGIFANFPLLGRTITTSPSFLTHKLSKEVTRASTSPPRPKRIV. FMN is bound by residues 63-65, S89, 140-143, and R175; these read GAT and SMKS. Dimethylallyl phosphate is bound by residues Y205 and R221.

The protein belongs to the UbiX/PAD1 family. As to quaternary structure, oligomer.

Its subcellular location is the mitochondrion. It carries out the reaction dimethylallyl phosphate + FMNH2 = prenylated FMNH2 + phosphate. In terms of biological role, flavin prenyltransferase that catalyzes the synthesis of the prenylated FMN cofactor (prenyl-FMN) for the ferulic acid decarboxylase FDC1/ubiD. The prenyltransferase is metal-independent and links a dimethylallyl moiety from dimethylallyl monophosphate (DMAP) to the flavin N5 and C6 atoms of FMN. Involved in the decarboxylation of phenylacrylic acids like ferulic acid, p-coumaric acid or cinnamic acid, producing the corresponding vinyl derivatives which play the role of aroma metabolites. Also involved in the degradation of the food preservative sorbic acid (2,4-hexadienoic acid) to a volatile hydrocarbon, 1,3-pentadiene. Not essential for ubiquinone synthesis. Can rescue Q biosynthesis in E.coli strains lacking UbiX. Has mRNA binding activity. In Saccharomyces cerevisiae (strain ATCC 204508 / S288c) (Baker's yeast), this protein is Flavin prenyltransferase PAD1, mitochondrial.